The primary structure comprises 434 residues: Trigger factor (434 aa).

Residues 161-246 enclose the PPIase FKBP-type domain; it reads EDRVTVDFSG…LKKVEERELP (86 aa).

This sequence belongs to the FKBP-type PPIase family. Tig subfamily.

The protein localises to the cytoplasm. The enzyme catalyses [protein]-peptidylproline (omega=180) = [protein]-peptidylproline (omega=0). Involved in protein export. Acts as a chaperone by maintaining the newly synthesized protein in an open conformation. Functions as a peptidyl-prolyl cis-trans isomerase. In Serratia proteamaculans (strain 568), this protein is Trigger factor.